Reading from the N-terminus, the 296-residue chain is Diaminopimelate epimerase (296 aa).

Positions 17, 49, and 69 each coordinate substrate. The active-site Proton donor is Cys-78. Substrate contacts are provided by residues 79–80 (GN), Asn-171, Asn-205, and 223–224 (ER). The Proton acceptor role is filled by Cys-232. 233–234 (GT) contacts substrate.

It belongs to the diaminopimelate epimerase family. As to quaternary structure, homodimer.

The protein resides in the cytoplasm. It catalyses the reaction (2S,6S)-2,6-diaminopimelate = meso-2,6-diaminopimelate. It participates in amino-acid biosynthesis; L-lysine biosynthesis via DAP pathway; DL-2,6-diaminopimelate from LL-2,6-diaminopimelate: step 1/1. Its function is as follows. Catalyzes the stereoinversion of LL-2,6-diaminopimelate (L,L-DAP) to meso-diaminopimelate (meso-DAP), a precursor of L-lysine and an essential component of the bacterial peptidoglycan. The chain is Diaminopimelate epimerase from Methylorubrum extorquens (strain CM4 / NCIMB 13688) (Methylobacterium extorquens).